Consider the following 697-residue polypeptide: Long-chain-fatty-acid--CoA ligase 6 (697 aa).

A helical; Signal-anchor for type III membrane protein membrane pass occupies residues 25-45 (LSATTLVSVGALAAVLAYWLT). Topologically, residues 46-697 (HRPKALQPPC…QIEELYLVSV (652 aa)) are cytoplasmic.

The protein belongs to the ATP-dependent AMP-binding enzyme family. The cofactor is Mg(2+).

It localises to the mitochondrion outer membrane. It is found in the peroxisome membrane. The protein localises to the microsome membrane. The protein resides in the endoplasmic reticulum membrane. The catalysed reaction is a long-chain fatty acid + ATP + CoA = a long-chain fatty acyl-CoA + AMP + diphosphate. It carries out the reaction (5Z,8Z,11Z,14Z)-eicosatetraenoate + ATP + CoA = (5Z,8Z,11Z,14Z)-eicosatetraenoyl-CoA + AMP + diphosphate. The enzyme catalyses 15-hydroxy-(5Z,8Z,11Z,13E)-eicosatetraenoate + ATP + CoA = 15-hydroxy-(5Z,8Z,11Z,13E)-eicosatetraenoyl-CoA + AMP + diphosphate. It catalyses the reaction 12-hydroxy-(5Z,8Z,10E,14Z)-eicosatetraenoate + ATP + CoA = 12-hydroxy-(5Z,8Z,10E,14Z)-eicosatetraenoyl-CoA + AMP + diphosphate. The catalysed reaction is 5-hydroxy-(6E,8Z,11Z,14Z)-eicosatetraenoate + ATP + CoA = 5-hydroxy-(6E,8Z,11Z,14Z)-eicosatetraenoyl-CoA + AMP + diphosphate. It carries out the reaction hexadecanoate + ATP + CoA = hexadecanoyl-CoA + AMP + diphosphate. The enzyme catalyses (E)-hexadec-2-enoate + ATP + CoA = (2E)-hexadecenoyl-CoA + AMP + diphosphate. Catalyzes the conversion of long-chain fatty acids to their active form acyl-CoA for both synthesis of cellular lipids, and degradation via beta-oxidation. Plays an important role in fatty acid metabolism in brain and the acyl-CoAs produced may be utilized exclusively for the synthesis of the brain lipid. In Mus musculus (Mouse), this protein is Long-chain-fatty-acid--CoA ligase 6 (Acsl6).